A 165-amino-acid chain; its full sequence is Small ribosomal subunit protein uS5 (165 aa).

Residues 10–73 enclose the S5 DRBM domain; sequence LVEKLVAVDR…EAARRNMITV (64 aa).

Belongs to the universal ribosomal protein uS5 family. As to quaternary structure, part of the 30S ribosomal subunit. Contacts proteins S4 and S8.

With S4 and S12 plays an important role in translational accuracy. In terms of biological role, located at the back of the 30S subunit body where it stabilizes the conformation of the head with respect to the body. The protein is Small ribosomal subunit protein uS5 of Acinetobacter baylyi (strain ATCC 33305 / BD413 / ADP1).